Reading from the N-terminus, the 272-residue chain is Putative esterase/lipase 3 (272 aa).

Residue H34 is part of the active site. The active-site Charge relay system is S100.

Belongs to the lipase/esterase LIP3/BchO family.

This is Putative esterase/lipase 3 from Mycoplasma pneumoniae (strain ATCC 29342 / M129 / Subtype 1) (Mycoplasmoides pneumoniae).